The following is a 133-amino-acid chain: Stage III sporulation protein AD (133 aa).

The next 3 membrane-spanning stretches (helical) occupy residues 2 to 22 (QIDIVQIVGLGLIATFLSLIV), 29 to 49 (FAFLIVVFAGCAIFLYLVDQI), and 108 to 128 (ILILVMAVPILTVIIETILGL).

The protein resides in the cell membrane. The sequence is that of Stage III sporulation protein AD (spoIIIAD) from Bacillus subtilis (strain 168).